The following is a 332-amino-acid chain: Ketol-acid reductoisomerase (NAD(+)) (332 aa).

A KARI N-terminal Rossmann domain is found at 1–186 (MEILHDEDVD…HWTKAGILEC (186 aa)). Residues 24-27 (YGAQ), Glu-46, Asn-55, Ser-57, and 87-90 (DEVQ) contribute to the NAD(+) site. Residue His-112 is part of the active site. Residue Gly-138 coordinates NAD(+). Residues 187 to 332 (TFEQETYEDL…AEIRKLFAQK (146 aa)) form the KARI C-terminal knotted domain. Mg(2+) is bound by residues Asp-195, Glu-199, Glu-231, and Glu-235. Substrate is bound at residue Ser-256.

This sequence belongs to the ketol-acid reductoisomerase family. As to quaternary structure, homodimer. Requires Mg(2+) as cofactor.

The enzyme catalyses (2R)-2,3-dihydroxy-3-methylbutanoate + NAD(+) = (2S)-2-acetolactate + NADH + H(+). Its pathway is amino-acid biosynthesis; L-isoleucine biosynthesis; L-isoleucine from 2-oxobutanoate: step 2/4. It participates in amino-acid biosynthesis; L-valine biosynthesis; L-valine from pyruvate: step 2/4. Functionally, involved in the biosynthesis of branched-chain amino acids (BCAA). Catalyzes an alkyl-migration followed by a ketol-acid reduction of (S)-2-acetolactate (S2AL) to yield (R)-2,3-dihydroxy-isovalerate. In the isomerase reaction, S2AL is rearranged via a Mg-dependent methyl migration to produce 3-hydroxy-3-methyl-2-ketobutyrate (HMKB). In the reductase reaction, this 2-ketoacid undergoes a metal-dependent reduction by NADH to yield (R)-2,3-dihydroxy-isovalerate. The chain is Ketol-acid reductoisomerase (NAD(+)) from Uncultured archaeon GZfos26G2.